Here is a 324-residue protein sequence, read N- to C-terminus: Probable pectinesterase A (324 aa).

The N-terminal stretch at 1-19 (MHGSLLKLALLSFSLASSA) is a signal peptide. A substrate-binding site is contributed by Q142. The active-site Proton donor is D165. Catalysis depends on D186, which acts as the Nucleophile. Substrate contacts are provided by R246 and W248. N-linked (GlcNAc...) asparagine glycosylation is present at N285.

The protein belongs to the pectinesterase family.

The protein resides in the secreted. The enzyme catalyses [(1-&gt;4)-alpha-D-galacturonosyl methyl ester](n) + n H2O = [(1-&gt;4)-alpha-D-galacturonosyl](n) + n methanol + n H(+). It participates in glycan metabolism; pectin degradation; 2-dehydro-3-deoxy-D-gluconate from pectin: step 1/5. Functionally, involved in maceration and soft-rotting of plant tissue. This is Probable pectinesterase A (pmeA) from Aspergillus flavus (strain ATCC 200026 / FGSC A1120 / IAM 13836 / NRRL 3357 / JCM 12722 / SRRC 167).